The chain runs to 499 residues: Neuronal acetylcholine receptor subunit alpha-3 (499 aa).

The signal sequence occupies residues 1 to 25 (MGVVLLPPPLSMLMLVLMLLPAASA). At 26–244 (SEAEHRLFQY…PLFYTINLII (219 aa)) the chain is on the extracellular side. Asparagine 49 and asparagine 166 each carry an N-linked (GlcNAc...) asparagine glycan. Cystine bridges form between cysteine 153–cysteine 167 and cysteine 217–cysteine 218. Residues 245 to 260 (PCLLISFLTVLVFYLP) traverse the membrane as a helical segment. The Cytoplasmic portion of the chain corresponds to 261 to 262 (SD). A helical transmembrane segment spans residues 263–279 (CGEKVTLCISVLLSLTV). Glutamate 265 is a binding site for Na(+). The Extracellular portion of the chain corresponds to 280–301 (FLLVITETIPSTSLVIPLIGEY). A helical membrane pass occupies residues 302-320 (LLFTMIFVTLSIVITVFVL). The Cytoplasmic portion of the chain corresponds to 321–468 (NVHYRTPTTH…QDDWKYVAMV (148 aa)). Phosphoserine is present on residues serine 407 and serine 410. Residues 469-487 (IDRIFLWVFILVCILGTAG) traverse the membrane as a helical segment. Residues 488-499 (LFLQPLMARDDT) lie on the Extracellular side of the membrane.

This sequence belongs to the ligand-gated ion channel (TC 1.A.9) family. Acetylcholine receptor (TC 1.A.9.1) subfamily. Alpha-3/CHRNA3 sub-subfamily. In terms of assembly, neuronal AChR is composed of two different types of subunits: alpha and beta. CHRNA3/Alpha-3 subunit can be combined to CHRNB2/beta-2 or CHRNB4/beta-4 to give rise to functional receptors. Part of a complex composed of STUB1/CHIP, VCP/p97, CHRNA3, and UBXN2A that modulates the ubiquitination and endoplasmic reticulum-associated degradation (ERAD) of CHRNA3. Within the complex UBXN2A acts as a scaffold protein required for the interaction of CHRNA3 with VCP/p97, this interaction also inhibits CHRNA3 ubiquitination by STUB1/CHIP and subsequently ERAD. Interacts with UBXN2A (via SEP domain), the interaction is required for the interaction of CHRNA3 in the STUB1:VCP:UBXN2A complex. Interacts with RIC3; which is required for proper folding and assembly. Post-translationally, ubiquitinated; by STUB1/CHIP and thereafter degraded by the 26S proteosome complex. In terms of tissue distribution, expressed in neurons. Expressed in umbrella cells of urothelium (at protein level).

It is found in the synaptic cell membrane. The protein resides in the cell membrane. Its subcellular location is the endoplasmic reticulum. It localises to the golgi apparatus. The enzyme catalyses Ca(2+)(in) = Ca(2+)(out). It carries out the reaction K(+)(in) = K(+)(out). It catalyses the reaction Na(+)(in) = Na(+)(out). Activated by a myriad of ligands such as acetylcholine, cytisine, nicotine, choline and epibatidine. The heteropentamer CHRNA3:CHRNB2 activity is blocked by alpha-conotoxins ImI, ImII, PnIA, GID and MII. The heteropentamer CHRNA3:CHRNB4 activity is blocked by the alpha-conotoxin ImI and AuIB. Component of neuronal acetylcholine receptors (nAChRs) that function as pentameric, ligand-gated cation channels with high calcium permeability among other activities. nAChRs are excitatory neurotrasnmitter receptors formed by a collection of nAChR subunits known to mediate synaptic transmission in the nervous system and the neuromuscular junction. Each nAchR subunit confers differential attributes to channel properties, including activation, deactivation and desensitization kinetics, pH sensitivity, cation permeability, and binding to allosteric modulators. CHRNA3 forms heteropentameric neuronal acetylcholine receptors with CHRNB2 and CHRNB4. CHRNA3:CHRNB4 being predominant in neurons of the autonomic ganglia, it is known as ganglionic nicotinic receptor. CHRNA3:CHRNB4 also plays an important role in the habenulo-interpeduncular tract, modulating the mesolimbic dopamine system and affecting reward circuits and addiction. Hypothalamic CHRNA3:CHRNB4 nAChR activation by nicotine leads to activation of POMC neurons and a decrease in food intake. Also expressed in the urothelium where it modulates reflex bladder activity by increasing intracellular calcium through extracellular influx and basal ATP release. This Rattus norvegicus (Rat) protein is Neuronal acetylcholine receptor subunit alpha-3 (Chrna3).